The chain runs to 413 residues: 4-hydroxy-3-methylbut-2-en-1-yl diphosphate synthase (flavodoxin) (413 aa).

Positions 305, 308, 351, and 358 each coordinate [4Fe-4S] cluster.

Belongs to the IspG family. It depends on [4Fe-4S] cluster as a cofactor.

It carries out the reaction (2E)-4-hydroxy-3-methylbut-2-enyl diphosphate + oxidized [flavodoxin] + H2O + 2 H(+) = 2-C-methyl-D-erythritol 2,4-cyclic diphosphate + reduced [flavodoxin]. Its pathway is isoprenoid biosynthesis; isopentenyl diphosphate biosynthesis via DXP pathway; isopentenyl diphosphate from 1-deoxy-D-xylulose 5-phosphate: step 5/6. Converts 2C-methyl-D-erythritol 2,4-cyclodiphosphate (ME-2,4cPP) into 1-hydroxy-2-methyl-2-(E)-butenyl 4-diphosphate. This is 4-hydroxy-3-methylbut-2-en-1-yl diphosphate synthase (flavodoxin) from Bartonella tribocorum (strain CIP 105476 / IBS 506).